We begin with the raw amino-acid sequence, 434 residues long: Adenylosuccinate synthetase (434 aa).

GTP is bound by residues 15 to 21 (GDEGKGK) and 43 to 45 (GHT). Catalysis depends on Asp16, which acts as the Proton acceptor. Positions 16 and 43 each coordinate Mg(2+). IMP is bound by residues 16–19 (DEGK), 41–44 (NAGH), Thr133, Arg147, Gln228, Thr243, and Arg307. His44 functions as the Proton donor in the catalytic mechanism. 303–309 (SVTGRAR) provides a ligand contact to substrate. Residues Arg309, 335 to 337 (KLD), and 418 to 420 (STG) contribute to the GTP site.

The protein belongs to the adenylosuccinate synthetase family. As to quaternary structure, homodimer. It depends on Mg(2+) as a cofactor.

It localises to the cytoplasm. The enzyme catalyses IMP + L-aspartate + GTP = N(6)-(1,2-dicarboxyethyl)-AMP + GDP + phosphate + 2 H(+). Its pathway is purine metabolism; AMP biosynthesis via de novo pathway; AMP from IMP: step 1/2. Functionally, plays an important role in the de novo pathway of purine nucleotide biosynthesis. Catalyzes the first committed step in the biosynthesis of AMP from IMP. The chain is Adenylosuccinate synthetase from Neisseria meningitidis serogroup C / serotype 2a (strain ATCC 700532 / DSM 15464 / FAM18).